We begin with the raw amino-acid sequence, 399 residues long: Coenzyme A biosynthesis bifunctional protein CoaBC (399 aa).

The interval 1–190 (MQTLAGKKIL…FQPKVLEGKS (190 aa)) is phosphopantothenoylcysteine decarboxylase. Cys-159 (proton donor) is an active-site residue. A phosphopantothenate--cysteine ligase region spans residues 191–399 (ILISAGPTRE…KILEKMRELM (209 aa)). CTP is bound by residues Asp-279, Lys-289, 307–310 (PDIV), Phe-326, Lys-340, and Lys-344.

The protein in the N-terminal section; belongs to the HFCD (homo-oligomeric flavin containing Cys decarboxylase) superfamily. This sequence in the C-terminal section; belongs to the PPC synthetase family. Requires Mg(2+) as cofactor. The cofactor is FMN.

It catalyses the reaction N-[(R)-4-phosphopantothenoyl]-L-cysteine + H(+) = (R)-4'-phosphopantetheine + CO2. It carries out the reaction (R)-4'-phosphopantothenate + L-cysteine + CTP = N-[(R)-4-phosphopantothenoyl]-L-cysteine + CMP + diphosphate + H(+). It participates in cofactor biosynthesis; coenzyme A biosynthesis; CoA from (R)-pantothenate: step 2/5. The protein operates within cofactor biosynthesis; coenzyme A biosynthesis; CoA from (R)-pantothenate: step 3/5. Functionally, catalyzes two sequential steps in the biosynthesis of coenzyme A. In the first step cysteine is conjugated to 4'-phosphopantothenate to form 4-phosphopantothenoylcysteine. In the second step the latter compound is decarboxylated to form 4'-phosphopantotheine. The sequence is that of Coenzyme A biosynthesis bifunctional protein CoaBC from Vibrio parahaemolyticus serotype O3:K6 (strain RIMD 2210633).